Consider the following 312-residue polypeptide: tRNA dimethylallyltransferase (312 aa).

Position 11–18 (11–18 (GLTATGKT)) interacts with ATP. 13–18 (TATGKT) is a substrate binding site. The interval 36–39 (DSMC) is interaction with substrate tRNA.

It belongs to the IPP transferase family. As to quaternary structure, monomer. Mg(2+) serves as cofactor.

It catalyses the reaction adenosine(37) in tRNA + dimethylallyl diphosphate = N(6)-dimethylallyladenosine(37) in tRNA + diphosphate. Functionally, catalyzes the transfer of a dimethylallyl group onto the adenine at position 37 in tRNAs that read codons beginning with uridine, leading to the formation of N6-(dimethylallyl)adenosine (i(6)A). This Caldicellulosiruptor bescii (strain ATCC BAA-1888 / DSM 6725 / KCTC 15123 / Z-1320) (Anaerocellum thermophilum) protein is tRNA dimethylallyltransferase.